A 236-amino-acid chain; its full sequence is Ubiquinone biosynthesis O-methyltransferase (236 aa).

4 residues coordinate S-adenosyl-L-methionine: Arg-39, Gly-59, Asp-80, and Met-124.

Belongs to the methyltransferase superfamily. UbiG/COQ3 family.

The catalysed reaction is a 3-demethylubiquinol + S-adenosyl-L-methionine = a ubiquinol + S-adenosyl-L-homocysteine + H(+). The enzyme catalyses a 3-(all-trans-polyprenyl)benzene-1,2-diol + S-adenosyl-L-methionine = a 2-methoxy-6-(all-trans-polyprenyl)phenol + S-adenosyl-L-homocysteine + H(+). The protein operates within cofactor biosynthesis; ubiquinone biosynthesis. Its function is as follows. O-methyltransferase that catalyzes the 2 O-methylation steps in the ubiquinone biosynthetic pathway. The sequence is that of Ubiquinone biosynthesis O-methyltransferase from Shewanella sp. (strain W3-18-1).